Consider the following 418-residue polypeptide: Gamma-glutamyl phosphate reductase (418 aa).

Belongs to the gamma-glutamyl phosphate reductase family.

It localises to the cytoplasm. The enzyme catalyses L-glutamate 5-semialdehyde + phosphate + NADP(+) = L-glutamyl 5-phosphate + NADPH + H(+). The protein operates within amino-acid biosynthesis; L-proline biosynthesis; L-glutamate 5-semialdehyde from L-glutamate: step 2/2. Catalyzes the NADPH-dependent reduction of L-glutamate 5-phosphate into L-glutamate 5-semialdehyde and phosphate. The product spontaneously undergoes cyclization to form 1-pyrroline-5-carboxylate. The sequence is that of Gamma-glutamyl phosphate reductase from Moorella thermoacetica (strain ATCC 39073 / JCM 9320).